The primary structure comprises 240 residues: Putative cytochrome c-type biogenesis protein DbsD-like (240 aa).

6 helical membrane passes run 32–52 (FVFF…ILPI), 74–94 (FFFC…ATLL), 104–124 (GIPV…LNIV), 149–169 (VGIG…LLIW), 176–196 (LFIG…PIII), and 218–238 (APFS…SSIL).

The protein belongs to the DsbD family.

Its subcellular location is the plastid. The protein localises to the chloroplast membrane. Its function is as follows. Could be involved in cytochrome c synthesis. The polypeptide is Putative cytochrome c-type biogenesis protein DbsD-like (Porphyra purpurea (Red seaweed)).